Reading from the N-terminus, the 174-residue chain is 2-oxo-4-hydroxy-4-carboxy-5-ureidoimidazoline decarboxylase (174 aa).

Histidine 67 (proton donor) is an active-site residue. Residues proline 68, 84 to 88, and 119 to 123 contribute to the substrate site; these read SQEEQ and FVICA. A Microbody targeting signal motif is present at residues 172-174; the sequence is TKL.

The protein belongs to the OHCU decarboxylase family. As to quaternary structure, homodimer.

It is found in the peroxisome. It catalyses the reaction 5-hydroxy-2-oxo-4-ureido-2,5-dihydro-1H-imidazole-5-carboxylate + H(+) = (S)-allantoin + CO2. It participates in purine metabolism; urate degradation; (S)-allantoin from urate: step 3/3. Functionally, catalyzes the stereoselective decarboxylation of 2-oxo-4-hydroxy-4-carboxy-5-ureidoimidazoline (OHCU) to (S)-allantoin. The polypeptide is 2-oxo-4-hydroxy-4-carboxy-5-ureidoimidazoline decarboxylase (urad) (Danio rerio (Zebrafish)).